The primary structure comprises 271 residues: Putative hydro-lyase blr2921 (271 aa).

This sequence belongs to the D-glutamate cyclase family.

This Bradyrhizobium diazoefficiens (strain JCM 10833 / BCRC 13528 / IAM 13628 / NBRC 14792 / USDA 110) protein is Putative hydro-lyase blr2921.